The following is a 427-amino-acid chain: Serine--tRNA ligase (427 aa).

231-233 (TAE) lines the L-serine pocket. 262–264 (RSE) contributes to the ATP binding site. Residue Glu285 participates in L-serine binding. 349 to 352 (EISS) serves as a coordination point for ATP. Ser385 serves as a coordination point for L-serine.

This sequence belongs to the class-II aminoacyl-tRNA synthetase family. Type-1 seryl-tRNA synthetase subfamily. As to quaternary structure, homodimer. The tRNA molecule binds across the dimer.

It localises to the cytoplasm. The enzyme catalyses tRNA(Ser) + L-serine + ATP = L-seryl-tRNA(Ser) + AMP + diphosphate + H(+). It carries out the reaction tRNA(Sec) + L-serine + ATP = L-seryl-tRNA(Sec) + AMP + diphosphate + H(+). It functions in the pathway aminoacyl-tRNA biosynthesis; selenocysteinyl-tRNA(Sec) biosynthesis; L-seryl-tRNA(Sec) from L-serine and tRNA(Sec): step 1/1. Catalyzes the attachment of serine to tRNA(Ser). Is also able to aminoacylate tRNA(Sec) with serine, to form the misacylated tRNA L-seryl-tRNA(Sec), which will be further converted into selenocysteinyl-tRNA(Sec). The chain is Serine--tRNA ligase from Brucella abortus (strain S19).